We begin with the raw amino-acid sequence, 104 residues long: ATP synthase subunit c (104 aa).

2 helical membrane-spanning segments follow: residues 37-57 (LLGA…QGAV) and 83-103 (AGIA…LIFV).

Belongs to the ATPase C chain family. In terms of assembly, F-type ATPases have 2 components, F(1) - the catalytic core - and F(0) - the membrane proton channel. F(1) has five subunits: alpha(3), beta(3), gamma(1), delta(1), epsilon(1). F(0) has three main subunits: a(1), b(2) and c(10-14). The alpha and beta chains form an alternating ring which encloses part of the gamma chain. F(1) is attached to F(0) by a central stalk formed by the gamma and epsilon chains, while a peripheral stalk is formed by the delta and b chains.

It localises to the cell membrane. In terms of biological role, f(1)F(0) ATP synthase produces ATP from ADP in the presence of a proton or sodium gradient. F-type ATPases consist of two structural domains, F(1) containing the extramembraneous catalytic core and F(0) containing the membrane proton channel, linked together by a central stalk and a peripheral stalk. During catalysis, ATP synthesis in the catalytic domain of F(1) is coupled via a rotary mechanism of the central stalk subunits to proton translocation. Its function is as follows. Key component of the F(0) channel; it plays a direct role in translocation across the membrane. A homomeric c-ring of between 10-14 subunits forms the central stalk rotor element with the F(1) delta and epsilon subunits. In Mesoplasma florum (strain ATCC 33453 / NBRC 100688 / NCTC 11704 / L1) (Acholeplasma florum), this protein is ATP synthase subunit c.